Here is a 950-residue protein sequence, read N- to C-terminus: Serine/threonine-protein phosphatase 4 regulatory subunit 1 (950 aa).

9 HEAT repeats span residues 1 to 25, 26 to 63, 65 to 81, 82 to 119, 127 to 164, 168 to 206, 208 to 246, 248 to 285, and 287 to 324; these read MADLSLLQEDLQEDADGFGVDDYSS, ESDVIIIPSALDFVSQDEMLTPLGRLDKYAASENIFNR, MVARSLLDTLREVCDDE, RDCIAVLERISRLADDSEPTVRAELMEQVPHIALFCQE, AFSKFLLPIVVRYLADQNNQVRKTSQAALLALLEQELI, DVETKVCPVLIELTAPDSNDDVKTEAVAIMCKMAPMVGK, ITERLILPRFCEMCCDCRMFHVRKVCAANFGDICSVVGQ, ATEEMLLPRFFQLCSDNVWGVRKACAECFMAVSCATCQ, and IRRTKLSALFINLISDPSRWVRQAAFQSLGPFISTFAN. 3 disordered regions span residues 326 to 374, 413 to 438, and 473 to 499; these read SSSG…SVSN, ESHQEAASNENDKKPGNYKSMLRPEV, and EQNSGGKPSPEGPEEESEGPVPSSPNI. Over residues 332 to 365 the composition is skewed to basic and acidic residues; it reads FKEESKSSEEMSVENKNRTRDQEAPEDVQVRPED. HEAT repeat units lie at residues 505–542, 568–606, 698–734, 799–837, and 861–898; these read KELEEMIENLEPHIDDPDVKAQVEVLSAALRASSLDAH, INQEDSVPLISDAVENMDSTLHYIHSDSDLSNNSSFSPD, LTAADLVPIFNGFLKDLDEVRIGVLKHLHDFLKLLHI, WISYKLVSEMVKKLHAATPPTFGVDLINELVENFGRCPK, and QFAVHLMPHLLTLANDRVPNVRVLLAKTLRQTLLEKDY. Position 935 is a phosphoserine (Ser-935).

In terms of assembly, serine/threonine-protein phosphatase 4 (PP4) occurs in different assemblies of the catalytic and one or more regulatory subunits. Component of the PP4 complex PPP4C-PPP4R1. Interacts with HDAC3. As to quaternary structure, (Microbial infection) Interacts with merkel polyomavirus small tumor antigen; this interaction bridges small tumor antigen with NEMO to inhibit NF-kappa-B. As to expression, widely expressed with high expression in cultured mesangial cells. Isoform 1 and isoform 2 are expressed in renal tissues.

In terms of biological role, regulatory subunit of serine/threonine-protein phosphatase 4. May play a role in regulation of cell division in renal glomeruli. The PPP4C-PPP4R1 PP4 complex may play a role in dephosphorylation and regulation of HDAC3. Plays a role in the inhibition of TNF-induced NF-kappa-B activation by regulating the dephosphorylation of TRAF2. Its function is as follows. (Microbial infection) Participates in merkel polyomavirus-mediated inhibition of NF-kappa-B by bridging viral small tumor antigen with NEMO. In Homo sapiens (Human), this protein is Serine/threonine-protein phosphatase 4 regulatory subunit 1 (PPP4R1).